We begin with the raw amino-acid sequence, 235 residues long: Octanoyltransferase (235 aa).

Residues 28–203 (GRAEETLLLL…PFAGLPADAL (176 aa)) form the BPL/LPL catalytic domain. Substrate contacts are provided by residues 66–73 (RGGDVTWH), 133–135 (SIG), and 146–148 (GFA). Residue Cys-164 is the Acyl-thioester intermediate of the active site. Positions 202 to 235 (ALPEQPRDAVQPSSCDDVHAPSTTSRRPPCPLTV) are disordered.

This sequence belongs to the LipB family.

Its subcellular location is the cytoplasm. The catalysed reaction is octanoyl-[ACP] + L-lysyl-[protein] = N(6)-octanoyl-L-lysyl-[protein] + holo-[ACP] + H(+). Its pathway is protein modification; protein lipoylation via endogenous pathway; protein N(6)-(lipoyl)lysine from octanoyl-[acyl-carrier-protein]: step 1/2. Its function is as follows. Catalyzes the transfer of endogenously produced octanoic acid from octanoyl-acyl-carrier-protein onto the lipoyl domains of lipoate-dependent enzymes. Lipoyl-ACP can also act as a substrate although octanoyl-ACP is likely to be the physiological substrate. This Geobacter sulfurreducens (strain ATCC 51573 / DSM 12127 / PCA) protein is Octanoyltransferase.